A 102-amino-acid polypeptide reads, in one-letter code: Small ribosomal subunit protein eS24 (102 aa).

Belongs to the eukaryotic ribosomal protein eS24 family.

The sequence is that of Small ribosomal subunit protein eS24 from Methanococcus aeolicus (strain ATCC BAA-1280 / DSM 17508 / OCM 812 / Nankai-3).